Consider the following 460-residue polypeptide: uncharacterized protein (460 aa).

It to yeast YGL164c.

This is an uncharacterized protein from Schizosaccharomyces pombe (strain 972 / ATCC 24843) (Fission yeast).